We begin with the raw amino-acid sequence, 379 residues long: Arginine biosynthesis bifunctional protein ArgJ (379 aa).

Residues threonine 140, lysine 160, threonine 171, glutamate 249, asparagine 374, and threonine 379 each coordinate substrate. Threonine 171 functions as the Nucleophile in the catalytic mechanism.

The protein belongs to the ArgJ family. In terms of assembly, heterotetramer of two alpha and two beta chains.

The protein resides in the cytoplasm. It carries out the reaction N(2)-acetyl-L-ornithine + L-glutamate = N-acetyl-L-glutamate + L-ornithine. The catalysed reaction is L-glutamate + acetyl-CoA = N-acetyl-L-glutamate + CoA + H(+). Its pathway is amino-acid biosynthesis; L-arginine biosynthesis; L-ornithine and N-acetyl-L-glutamate from L-glutamate and N(2)-acetyl-L-ornithine (cyclic): step 1/1. The protein operates within amino-acid biosynthesis; L-arginine biosynthesis; N(2)-acetyl-L-ornithine from L-glutamate: step 1/4. Its function is as follows. Catalyzes two activities which are involved in the cyclic version of arginine biosynthesis: the synthesis of N-acetylglutamate from glutamate and acetyl-CoA as the acetyl donor, and of ornithine by transacetylation between N(2)-acetylornithine and glutamate. The protein is Arginine biosynthesis bifunctional protein ArgJ of Archaeoglobus fulgidus (strain ATCC 49558 / DSM 4304 / JCM 9628 / NBRC 100126 / VC-16).